The following is a 150-amino-acid chain: D-aminoacyl-tRNA deacylase (150 aa).

The Gly-cisPro motif, important for rejection of L-amino acids motif lies at 140 to 141; it reads GP.

Belongs to the DTD family. Homodimer.

Its subcellular location is the cytoplasm. It catalyses the reaction glycyl-tRNA(Ala) + H2O = tRNA(Ala) + glycine + H(+). The catalysed reaction is a D-aminoacyl-tRNA + H2O = a tRNA + a D-alpha-amino acid + H(+). In terms of biological role, an aminoacyl-tRNA editing enzyme that deacylates mischarged D-aminoacyl-tRNAs. Also deacylates mischarged glycyl-tRNA(Ala), protecting cells against glycine mischarging by AlaRS. Acts via tRNA-based rather than protein-based catalysis; rejects L-amino acids rather than detecting D-amino acids in the active site. By recycling D-aminoacyl-tRNA to D-amino acids and free tRNA molecules, this enzyme counteracts the toxicity associated with the formation of D-aminoacyl-tRNA entities in vivo and helps enforce protein L-homochirality. This chain is D-aminoacyl-tRNA deacylase (DTD1), found in Eremothecium gossypii (strain ATCC 10895 / CBS 109.51 / FGSC 9923 / NRRL Y-1056) (Yeast).